The chain runs to 109 residues: Meiotically up-regulated gene 153 protein (109 aa).

The protein resides in the mitochondrion. Its function is as follows. Has a role in meiosis. The protein is Meiotically up-regulated gene 153 protein (mug153) of Schizosaccharomyces pombe (strain 972 / ATCC 24843) (Fission yeast).